The sequence spans 556 residues: Peptide chain release factor 3 (556 aa).

The tr-type G domain maps to 28–297 (QQRRNFAIIS…AFLDYALKPG (270 aa)). Residues 37–44 (SHPDAGKT), 105–109 (DTPGH), and 159–162 (NKMD) contribute to the GTP site.

Belongs to the TRAFAC class translation factor GTPase superfamily. Classic translation factor GTPase family. PrfC subfamily.

Its subcellular location is the cytoplasm. In terms of biological role, increases the formation of ribosomal termination complexes and stimulates activities of RF-1 and RF-2. It binds guanine nucleotides and has strong preference for UGA stop codons. It may interact directly with the ribosome. The stimulation of RF-1 and RF-2 is significantly reduced by GTP and GDP, but not by GMP. This is Peptide chain release factor 3 from Synechococcus elongatus (strain ATCC 33912 / PCC 7942 / FACHB-805) (Anacystis nidulans R2).